The primary structure comprises 507 residues: Cytochrome P450 monooxygenase ptmU (507 aa).

Residues 4–24 (VNAWWVGGSLLLGIWAIVVFF) traverse the membrane as a helical segment. Residues Asn98, Asn202, and Asn398 are each glycosylated (N-linked (GlcNAc...) asparagine). Cys444 is a binding site for heme.

This sequence belongs to the cytochrome P450 family. It depends on heme as a cofactor.

It localises to the membrane. The protein operates within secondary metabolite biosynthesis. Its function is as follows. Cytochrome P450 monooxygenase; part of the gene cluster that mediates the biosynthesis of the indole diterpenes penitrems. The geranylgeranyl diphosphate (GGPP) synthase ptmG catalyzes the first step in penitrem biosynthesis via conversion of farnesyl pyrophosphate and isopentyl pyrophosphate into geranylgeranyl pyrophosphate (GGPP). Condensation of indole-3-glycerol phosphate with GGPP by the prenyl transferase ptmC then forms 3-geranylgeranylindole (3-GGI). Epoxidation by the FAD-dependent monooxygenase ptmM leads to a epoxidized-GGI that is substrate of the terpene cyclase ptmB for cyclization to yield paspaline. Paspaline is subsequently converted to 13-desoxypaxilline by the cytochrome P450 monooxygenase ptmP, the latter being then converted to paxilline by the cytochrome P450 monooxygenase ptmQ. Paxilline is converted to beta-paxitriol via C-10 ketoreduction by the short-chain dehydrogenase ptmH which can be monoprenylated at the C-20 by the indole diterpene prenyltransferase ptmD. A two-step elimination (acetylation and elimination) process performed by the O-acetyltransferase ptmV and ptmI leads to the production of the prenylated form of penijanthine. The FAD-linked oxidoreductase ptmO then converts the prenylated form of penijanthine into PC-M5 which is in turn transformed into PC-M4 by the aromatic dimethylallyltransferase ptmE. Five sequential oxidative transformations performed by the cytochrome P450 monooxygenases ptmK, ptmU, ptmL, ptmN and ptmJ yield the various penitrem compounds. PtmK, ptmU and ptmM are involved in the formation of the key bicyclic ring of penitrem C via the formation of the intermediates secopenitrem D and penitrem D. PtmL catalyzes the epoxidation of penitrem D and C to yield penitrem B and F, respectively. PtmJ catalyzes the last benzylic hydroxylation to convert penitrem B to prenitrem E and penitrem F to penitrem A. This chain is Cytochrome P450 monooxygenase ptmU, found in Penicillium ochrochloron.